Reading from the N-terminus, the 289-residue chain is Acetyl-coenzyme A carboxylase carboxyl transferase subunit beta (289 aa).

The region spanning 28 to 289 (VMTKCPKCKK…QGGEMAVWQS (262 aa)) is the CoA carboxyltransferase N-terminal domain. Residues C32, C35, C51, and C54 each contribute to the Zn(2+) site. Residues 32-54 (CPKCKKIMYTKELLKNLKVCVNC) form a C4-type zinc finger.

It belongs to the AccD/PCCB family. As to quaternary structure, acetyl-CoA carboxylase is a heterohexamer composed of biotin carboxyl carrier protein (AccB), biotin carboxylase (AccC) and two subunits each of ACCase subunit alpha (AccA) and ACCase subunit beta (AccD). The cofactor is Zn(2+).

It is found in the cytoplasm. It catalyses the reaction N(6)-carboxybiotinyl-L-lysyl-[protein] + acetyl-CoA = N(6)-biotinyl-L-lysyl-[protein] + malonyl-CoA. It functions in the pathway lipid metabolism; malonyl-CoA biosynthesis; malonyl-CoA from acetyl-CoA: step 1/1. Component of the acetyl coenzyme A carboxylase (ACC) complex. Biotin carboxylase (BC) catalyzes the carboxylation of biotin on its carrier protein (BCCP) and then the CO(2) group is transferred by the transcarboxylase to acetyl-CoA to form malonyl-CoA. In Bacillus cereus (strain ATCC 10987 / NRS 248), this protein is Acetyl-coenzyme A carboxylase carboxyl transferase subunit beta.